The following is a 562-amino-acid chain: MELETSVYRPNVAVYDSPDGVEVRGRYDQIFAKILTREALSFVAELQREFRGHVKYAMECRREARRRYNSGAVPGFDPSTKFIRDGDWSCASVPPAVADRRVEITGPVERKMIINALNSGAKVFMADFEDALSPSWENLMRGHVNLKDAVDGSITFHDKSRNRVYKLNDQTAKLFVRPRGWHLPEAHILIDGEPATGCLVDFGLYFFHNYAKFRQTQGSGFGPFFYLPKMEHSREAKIWNSVFERAEKMAGIERGSIRATVLIETLPAVFQMNEILYELRDHSVGLNCGRWDYIFSYVKTFQAHPDRLLPDRVLVGMGQHFMRSYSDLLIRTCHKRGVHAMGGMAAQIPIRDDPKANEMALDLVRKDKLREVRAGHDGTWAAHPGLIPICMEAFTGHMGKSPNQIKSVKREDAAAITEEDLLQIPRGVRTLEGLRLNTRVGIQYLAAWLTGSGSVPLYNLMEDAATAEISRVQNWQWIRYGVELDGDGLGVRVSKELFGRVVEEEMERIEKEVGKDKFKNGMYKEACKMFTKQCTAPELDDFLTLAVYNHIVAHYPINVSRL.

The Proton acceptor role is filled by R177. D463 functions as the Proton donor in the catalytic mechanism. A Microbody targeting signal motif is present at residues S560–L562.

This sequence belongs to the malate synthase family.

The protein resides in the glyoxysome. It catalyses the reaction glyoxylate + acetyl-CoA + H2O = (S)-malate + CoA + H(+). It functions in the pathway carbohydrate metabolism; glyoxylate cycle; (S)-malate from isocitrate: step 2/2. Its function is as follows. Does not seem to be essential for lipid utilization and gluconeogenesis in seedlings. The chain is Malate synthase from Arabidopsis thaliana (Mouse-ear cress).